Reading from the N-terminus, the 303-residue chain is Aquaporin NIP1-2 (303 aa).

The segment at 1–39 is disordered; the sequence is MAGREDGAAAGAMEEGQDSKEVKCESSEDGSSSSSSSRC. Positions 17–26 are enriched in basic and acidic residues; that stretch reads QDSKEVKCES. Helical transmembrane passes span 66–86 and 91–111; these read ILAEILGTYFMIFAGCGAVVV and GGAVTFPGICAVWGLVVMVLV. The NPA 1 motif lies at 123–125; that stretch reads NPA. Transmembrane regions (helical) follow at residues 145 to 165, 188 to 208, and 212 to 232; these read VVAQVLGSTMASLTLRVVFGG, AAALEFVISFFLMFVVSGVAT, and AIGELAGLAVGATVAVNVLFA. The short motif at 241–243 is the NPA 2 element; that stretch reads NPA. Residues 255–275 form a helical membrane-spanning segment; the sequence is YGGVWVYVAAPVSGTVCGAWA.

This sequence belongs to the MIP/aquaporin (TC 1.A.8) family. NIP (TC 1.A.8.12) subfamily. As to expression, expressed in roots and leaves, and at lower levels in anthers.

Its subcellular location is the membrane. Its function is as follows. Aquaporins facilitate the transport of water and small neutral solutes across cell membranes. The sequence is that of Aquaporin NIP1-2 (NIP1-2) from Oryza sativa subsp. japonica (Rice).